We begin with the raw amino-acid sequence, 292 residues long: NAD kinase (292 aa).

Catalysis depends on Asp73, which acts as the Proton acceptor. Residues Asp73–Gly74, Asn147–Glu148, His158, Arg175, Asp177, Thr188–Ser193, and Gln247 each bind NAD(+).

It belongs to the NAD kinase family. The cofactor is a divalent metal cation.

The protein localises to the cytoplasm. The enzyme catalyses NAD(+) + ATP = ADP + NADP(+) + H(+). Its function is as follows. Involved in the regulation of the intracellular balance of NAD and NADP, and is a key enzyme in the biosynthesis of NADP. Catalyzes specifically the phosphorylation on 2'-hydroxyl of the adenosine moiety of NAD to yield NADP. The protein is NAD kinase of Escherichia coli (strain SMS-3-5 / SECEC).